The primary structure comprises 369 residues: Uroporphyrinogen decarboxylase (369 aa).

The disordered stretch occupies residues methionine 1–leucine 26. Residues arginine 56 to arginine 60, aspartate 105, tyrosine 180, serine 235, and histidine 348 contribute to the substrate site.

This sequence belongs to the uroporphyrinogen decarboxylase family. Homodimer.

Its subcellular location is the cytoplasm. It catalyses the reaction uroporphyrinogen III + 4 H(+) = coproporphyrinogen III + 4 CO2. It functions in the pathway porphyrin-containing compound metabolism; protoporphyrin-IX biosynthesis; coproporphyrinogen-III from 5-aminolevulinate: step 4/4. Catalyzes the decarboxylation of four acetate groups of uroporphyrinogen-III to yield coproporphyrinogen-III. The chain is Uroporphyrinogen decarboxylase from Frankia casuarinae (strain DSM 45818 / CECT 9043 / HFP020203 / CcI3).